A 526-amino-acid polypeptide reads, in one-letter code: MQSESGIVADFEVGEEFHEEPKTYYELKSQPLKSSSSAEHSGASKPPLSSSTMTSRILLRQQLMREQMQEQERREQQQKLQAAQFMQQRVAVSQTPAINVSVPTTLPSATQVPMEVLKVQTHLENPTKYHIQQAQRHQVKQYLSTTLANKHASQVLSSPCPNQPGDHAMPPVPGSSAPNSPMAMLTLNSNCEKEAFYKFEEQSRAESECPGMNTHSRASCMQMDDVIDDIISLESSYNEEILGLMDPALQMANTLPVSGNLIDLYSNQGLPPPGLTISNSCPANLPNIKRELTACIFPTESEARALAKERQKKDNHNLIERRRRFNINDRIKELGTLIPKSNDPDMRWNKGTILKASVDYIRKLQREQQRAKDLENRQKKLEHANRHLLLRVQELEMQARAHGLSLIPSTGLCSPDLVNRIIKQEPVLENCSQELVQHQADLTCTTTLDLTDGTITFTNNLGTMPESSPAYSIPRKMGSNLEDILMDDALSPVGVTDPLLSSVSPGASKTSSRRSSMSAEETEHAC.

At Ser5 the chain carries Phosphoserine; by MTOR. Disordered regions lie at residues 20-54 (EPKTYYELKSQPLKSSSSAEHSGASKPPLSSSTMT) and 155-179 (VLSSPCPNQPGDHAMPPVPGSSAPN). The segment covering 34-44 (SSSSAEHSGAS) has biased composition (low complexity). Ser180 carries the phosphoserine; by MAPK modification. The transactivation stretch occupies residues 224–291 (DDVIDDIISL…PANLPNIKRE (68 aa)). Ser280 bears the Phosphoserine mark. Lys289 is covalently cross-linked (Glycyl lysine isopeptide (Lys-Gly) (interchain with G-Cter in SUMO)). The bHLH domain occupies 311–364 (QKKDNHNLIERRRRFNINDRIKELGTLIPKSNDPDMRWNKGTILKASVDYIRKL). Residues 355–401 (KASVDYIRKLQREQQRAKDLENRQKKLEHANRHLLLRVQELEMQARA) adopt a coiled-coil conformation. The leucine-zipper stretch occupies residues 374–395 (LENRQKKLEHANRHLLLRVQEL). The segment at 401–431 (AHGLSLIPSTGLCSPDLVNRIIKQEPVLENC) is DNA-binding regulation. Ser405 bears the Phosphoserine; by GSK3 mark. Ser414 bears the Phosphoserine mark. Residue Lys423 forms a Glycyl lysine isopeptide (Lys-Gly) (interchain with G-Cter in SUMO) linkage. Ser491 is subject to Phosphoserine. Residues 496-526 (TDPLLSSVSPGASKTSSRRSSMSAEETEHAC) form a disordered region. Low complexity predominate over residues 507–519 (ASKTSSRRSSMSA). Ser516 is subject to Phosphoserine; by RPS6KA1.

It belongs to the MiT/TFE family. Homodimer or heterodimer; dimerization is mediated via the coiled coil region. Efficient DNA binding requires dimerization with another bHLH protein. Binds DNA in the form of homodimer or heterodimer with either TFE3, TFEB or TFEC. Interacts with small GTPases Rag (RagA/RRAGA, RagB/RRAGB, RagC/RRAGC and/or RagD/RRAGD); promoting its recruitment to lysosomal membrane in the presence of nutrients. Interacts with KARS1. Identified in a complex with HINT1 and CTNNB1. Interacts with VSX2. In terms of processing, when nutrients are present, phosphorylation by MTOR at Ser-5 via non-canonical mTORC1 pathway promotes ubiquitination by the SCF(BTRC) complex, followed by degradation. Phosphorylation at Ser-405 significantly enhances the ability to bind the tyrosinase promoter. Phosphorylation by MARK3/cTAK1 at Ser-280 promotes association with 14-3-3/YWHA adapters and retention in the cytosol. Phosphorylated at Ser-180 and Ser-516 following KIT signaling, triggering a short live activation: Phosphorylation at Ser-180 and Ser-516 by MAPK and RPS6KA1, respectively, activate the transcription factor activity but also promote ubiquitination and subsequent degradation by the proteasome. Phosphorylated in response to blue light (415nm). Ubiquitinated by the SCF(BTRC) and SCF(FBXW11) complexes following phosphorylation ar Ser-5 by MTOR, leading to its degradation by the proteasome. Ubiquitinated following phosphorylation at Ser-180, leading to subsequent degradation by the proteasome. Deubiquitinated by USP13, preventing its degradation. As to expression, in the adult, expressed at high levels in the heart, skin, skeletal muscle, intestine, stomach, kidney, ovary, lung, spleen and brain. In the embryo, expressed in developing eye, ear, skin and heart. Isoform M is expressed in melanocytes and also in the embryonic and adult heart while isoform A and isoform H are more widely expressed.

It is found in the nucleus. The protein resides in the cytoplasm. It localises to the lysosome membrane. Functionally, transcription factor that acts as a master regulator of melanocyte survival and differentiation as well as melanosome biogenesis. Binds to M-boxes (5'-TCATGTG-3') and symmetrical DNA sequences (E-boxes) (5'-CACGTG-3') found in the promoter of pigmentation genes, such as tyrosinase (TYR). Involved in the cellular response to amino acid availability by acting downstream of MTOR: in the presence of nutrients, MITF phosphorylation by MTOR promotes its inactivation. Upon starvation or lysosomal stress, inhibition of MTOR induces MITF dephosphorylation, resulting in transcription factor activity. Plays an important role in melanocyte development by regulating the expression of tyrosinase (TYR) and tyrosinase-related protein 1 (TYRP1). Plays a critical role in the differentiation of various cell types, such as neural crest-derived melanocytes, mast cells, osteoclasts and optic cup-derived retinal pigment epithelium. The sequence is that of Microphthalmia-associated transcription factor (Mitf) from Mus musculus (Mouse).